A 32-amino-acid chain; its full sequence is Putative leucine-rich repeat protein PS14 (32 aa).

The chain is Putative leucine-rich repeat protein PS14 from Pinus strobus (Eastern white pine).